The primary structure comprises 66 residues: Large ribosomal subunit protein bL35 (66 aa).

The tract at residues 22–41 is disordered; the sequence is VMSAQRGKRHGMIKRTKKQI. Basic residues predominate over residues 27-41; it reads RGKRHGMIKRTKKQI.

It belongs to the bacterial ribosomal protein bL35 family.

This chain is Large ribosomal subunit protein bL35, found in Rhodopseudomonas palustris (strain TIE-1).